A 404-amino-acid polypeptide reads, in one-letter code: Cysteine desulfurase IscS (404 aa).

Residues 75-76, Asn-155, Gln-183, and 203-205 contribute to the pyridoxal 5'-phosphate site; these read AT and SSH. The residue at position 206 (Lys-206) is an N6-(pyridoxal phosphate)lysine. Thr-243 contributes to the pyridoxal 5'-phosphate binding site. Cys-328 (cysteine persulfide intermediate) is an active-site residue. Cys-328 serves as a coordination point for [2Fe-2S] cluster.

It belongs to the class-V pyridoxal-phosphate-dependent aminotransferase family. NifS/IscS subfamily. As to quaternary structure, homodimer. Forms a heterotetramer with IscU, interacts with other sulfur acceptors. The cofactor is pyridoxal 5'-phosphate.

Its subcellular location is the cytoplasm. The catalysed reaction is (sulfur carrier)-H + L-cysteine = (sulfur carrier)-SH + L-alanine. It participates in cofactor biosynthesis; iron-sulfur cluster biosynthesis. In terms of biological role, master enzyme that delivers sulfur to a number of partners involved in Fe-S cluster assembly, tRNA modification or cofactor biosynthesis. Catalyzes the removal of elemental sulfur atoms from cysteine to produce alanine. Functions as a sulfur delivery protein for Fe-S cluster synthesis onto IscU, an Fe-S scaffold assembly protein, as well as other S acceptor proteins. In Haemophilus influenzae (strain PittGG), this protein is Cysteine desulfurase IscS.